The following is a 329-amino-acid chain: NADH-quinone oxidoreductase subunit H 2 (329 aa).

The next 8 helical transmembrane spans lie at G12–A32, W78–I98, V120–G140, L159–S179, G191–A211, L242–F262, L270–W290, and K309–V329.

It belongs to the complex I subunit 1 family. In terms of assembly, NDH-1 is composed of 14 different subunits. Subunits NuoA, H, J, K, L, M, N constitute the membrane sector of the complex.

It localises to the cell inner membrane. It carries out the reaction a quinone + NADH + 5 H(+)(in) = a quinol + NAD(+) + 4 H(+)(out). Its function is as follows. NDH-1 shuttles electrons from NADH, via FMN and iron-sulfur (Fe-S) centers, to quinones in the respiratory chain. The immediate electron acceptor for the enzyme in this species is believed to be ubiquinone. Couples the redox reaction to proton translocation (for every two electrons transferred, four hydrogen ions are translocated across the cytoplasmic membrane), and thus conserves the redox energy in a proton gradient. This subunit may bind ubiquinone. The sequence is that of NADH-quinone oxidoreductase subunit H 2 from Geobacter sulfurreducens (strain ATCC 51573 / DSM 12127 / PCA).